We begin with the raw amino-acid sequence, 492 residues long: Nuclear hormone receptor family member nhr-4 (492 aa).

The nuclear receptor DNA-binding region spans 47 to 122 (RLICDVCGDV…VGMNPDSVQN (76 aa)). 2 consecutive NR C4-type zinc fingers follow at residues 50–70 (CDVC…CNGC) and 86–110 (CRFG…LKKC). Residues 121 to 143 (QNERDRNAKNGGMGGPMSSPTQS) form a disordered region. The 267-residue stretch at 215 to 481 (MDFSIHSAVL…ELIQATHKTT (267 aa)) folds into the NR LBD domain.

Belongs to the nuclear hormone receptor family.

The protein localises to the nucleus. Orphan nuclear receptor. This chain is Nuclear hormone receptor family member nhr-4 (nhr-4), found in Caenorhabditis elegans.